The primary structure comprises 177 residues: Ribosome maturation factor RimM (177 aa).

One can recognise a PRC barrel domain in the interval 104–176 (DGEYYFFEIL…KIIVNMPEWL (73 aa)).

The protein belongs to the RimM family. Binds ribosomal protein uS19.

The protein resides in the cytoplasm. Its function is as follows. An accessory protein needed during the final step in the assembly of 30S ribosomal subunit, possibly for assembly of the head region. Essential for efficient processing of 16S rRNA. May be needed both before and after RbfA during the maturation of 16S rRNA. It has affinity for free ribosomal 30S subunits but not for 70S ribosomes. In Fervidobacterium nodosum (strain ATCC 35602 / DSM 5306 / Rt17-B1), this protein is Ribosome maturation factor RimM.